Reading from the N-terminus, the 503-residue chain is Maturase K (503 aa).

This sequence belongs to the intron maturase 2 family. MatK subfamily.

It is found in the plastid. Its subcellular location is the chloroplast. In terms of biological role, usually encoded in the trnK tRNA gene intron. Probably assists in splicing its own and other chloroplast group II introns. In Rosa canina (Dog rose), this protein is Maturase K.